A 308-amino-acid polypeptide reads, in one-letter code: Phosphatidate cytidylyltransferase (308 aa).

8 consecutive transmembrane segments (helical) span residues phenylalanine 30 to isoleucine 50, proline 73 to isoleucine 93, proline 100 to phenylalanine 120, isoleucine 127 to isoleucine 147, isoleucine 167 to phenylalanine 187, threonine 205 to leucine 225, phenylalanine 235 to glycine 255, and methionine 280 to isoleucine 300.

It belongs to the CDS family.

Its subcellular location is the cell membrane. It catalyses the reaction a 1,2-diacyl-sn-glycero-3-phosphate + CTP + H(+) = a CDP-1,2-diacyl-sn-glycerol + diphosphate. It participates in phospholipid metabolism; CDP-diacylglycerol biosynthesis; CDP-diacylglycerol from sn-glycerol 3-phosphate: step 3/3. This is Phosphatidate cytidylyltransferase (cdsA) from Chlamydia pneumoniae (Chlamydophila pneumoniae).